Consider the following 596-residue polypeptide: Cell adhesion molecule CEACAM20 (596 aa).

A signal peptide spans 1-30 (MGPADSWGHHWMGILLSASLCTVWSPPAAA). At 31–450 (QLTLNANPLD…SSLSSGAIAG (420 aa)) the chain is on the extracellular side. Ig-like C2-type domains follow at residues 58 to 154 (PQIH…PIFL), 160 to 246 (PDPV…GTLK), 256 to 341 (PQVV…LELT), and 346 to 432 (PDQV…TSVL). Residues Cys-90 and Cys-138 are joined by a disulfide bond. Residues Asn-96 and Asn-105 are each glycosylated (N-linked (GlcNAc...) asparagine). An intrachain disulfide couples Cys-276 to Cys-324. N-linked (GlcNAc...) asparagine glycosylation is found at Asn-280, Asn-306, Asn-317, Asn-368, and Asn-415. A disulfide bridge connects residues Cys-375 and Cys-416. A helical membrane pass occupies residues 451-471 (IVIGILAVIAVASELGYFLCI). Residues 472–585 (RNARRPSRKT…SIYEELVNPE (114 aa)) are Cytoplasmic-facing. 2 disordered regions span residues 477–510 (PSRKTTEDPSHETSQPIPKEEHPTEPSSESLSPE) and 527–563 (QPPDLPEETYETKLPSASRRGNSFSPWKPPPKPLMPP). Low complexity predominate over residues 501–510 (EPSSESLSPE). Residues 553-562 (WKPPPKPLMP) show a composition bias toward pro residues. Phosphotyrosine is present on residues Tyr-578 and Tyr-589.

This sequence belongs to the immunoglobulin superfamily. CEA family. In terms of assembly, interacts (via extracellular domain) with PTPRH (via extracellular domain); the interaction dephosphorylates CEACAM20. Interacts (phosphorylated form) with SYK (via SH2 domains); the interaction further enhances CEACAM20 phosphorylation. In terms of processing, phosphorylated on tyrosine residues by SYK, SRC and FYN in vitro.

Its subcellular location is the cell projection. It is found in the microvillus membrane. The protein resides in the apical cell membrane. Its function is as follows. Together with the tyrosine-protein kinase SYK, enhances production of the cytokine CXCL8/IL-8 via the NFKB pathway and may thus have a role in the intestinal immune response. The sequence is that of Cell adhesion molecule CEACAM20 from Homo sapiens (Human).